A 145-amino-acid chain; its full sequence is Large-conductance mechanosensitive channel (145 aa).

3 consecutive transmembrane segments (helical) span residues V14–L34, L38–P58, and G81–V101.

It belongs to the MscL family. In terms of assembly, homopentamer.

Its subcellular location is the cell inner membrane. In terms of biological role, channel that opens in response to stretch forces in the membrane lipid bilayer. May participate in the regulation of osmotic pressure changes within the cell. The sequence is that of Large-conductance mechanosensitive channel from Rhizobium leguminosarum bv. trifolii (strain WSM2304).